The primary structure comprises 629 residues: Translation initiation factor IF-2 (629 aa).

A disordered region spans residues 1-20 (MAKNIKTNKKPQQVNKKEMS). Residues 127–297 (HRAPIVTIMG…LLIAEMQDYK (171 aa)) form the tr-type G domain. The G1 stretch occupies residues 136 to 143 (GHVDHGKT). 136–143 (GHVDHGKT) contributes to the GTP binding site. The tract at residues 161–165 (GITQA) is G2. Residues 183–186 (DTPG) form a G3 region. Residues 183–187 (DTPGH) and 237–240 (NKCD) contribute to the GTP site. Positions 237 to 240 (NKCD) are G4. A G5 region spans residues 273 to 275 (SAK).

Belongs to the TRAFAC class translation factor GTPase superfamily. Classic translation factor GTPase family. IF-2 subfamily.

The protein resides in the cytoplasm. Functionally, one of the essential components for the initiation of protein synthesis. Protects formylmethionyl-tRNA from spontaneous hydrolysis and promotes its binding to the 30S ribosomal subunits. Also involved in the hydrolysis of GTP during the formation of the 70S ribosomal complex. This is Translation initiation factor IF-2 from Mesoplasma florum (strain ATCC 33453 / NBRC 100688 / NCTC 11704 / L1) (Acholeplasma florum).